Consider the following 105-residue polypeptide: MIASKFGIGQQVRHTLLGYLGVIVDVDPEYSLAEPEEDEIAANDELRAAPWYHVVMEDDDGQPIHTYLAEAQLSSETRDEHPEQPSLDELAKTIRQQLQAPRLRN.

It belongs to the HspQ family.

The protein resides in the cytoplasm. Functionally, involved in the degradation of certain denaturated proteins, including DnaA, during heat shock stress. In Klebsiella pneumoniae (strain 342), this protein is Heat shock protein HspQ.